The sequence spans 248 residues: 3-deoxy-manno-octulosonate cytidylyltransferase (248 aa).

This sequence belongs to the KdsB family.

It is found in the cytoplasm. The catalysed reaction is 3-deoxy-alpha-D-manno-oct-2-ulosonate + CTP = CMP-3-deoxy-beta-D-manno-octulosonate + diphosphate. Its pathway is nucleotide-sugar biosynthesis; CMP-3-deoxy-D-manno-octulosonate biosynthesis; CMP-3-deoxy-D-manno-octulosonate from 3-deoxy-D-manno-octulosonate and CTP: step 1/1. It functions in the pathway bacterial outer membrane biogenesis; lipopolysaccharide biosynthesis. Activates KDO (a required 8-carbon sugar) for incorporation into bacterial lipopolysaccharide in Gram-negative bacteria. The protein is 3-deoxy-manno-octulosonate cytidylyltransferase of Shigella flexneri.